The primary structure comprises 437 residues: Homogentisate 1,2-dioxygenase (437 aa).

Residues 15–34 are disordered; sequence NEHATSDPRVPDALPVGQNS. Positions 336, 342, and 372 each coordinate Fe cation.

Belongs to the homogentisate dioxygenase family. It depends on Fe cation as a cofactor. Expressed in the hypodermis and intestine.

It carries out the reaction homogentisate + O2 = 4-maleylacetoacetate + H(+). It functions in the pathway amino-acid degradation; L-phenylalanine degradation; acetoacetate and fumarate from L-phenylalanine: step 4/6. Its function is as follows. Plays a role in the tyrosine degradation pathway. In Caenorhabditis elegans, this protein is Homogentisate 1,2-dioxygenase.